Reading from the N-terminus, the 247-residue chain is NAD-dependent protein deacetylase (247 aa).

The Deacetylase sirtuin-type domain maps to 1-247; the sequence is MDTRKNLKEL…LGGIVEELGY (247 aa). 8 residues coordinate NAD(+): Ala23, Thr27, Phe34, Arg35, Gln104, Ile106, Asp107, and His122. Phe34 contacts nicotinamide. Residues Ile106 and Asp107 each contribute to the nicotinamide site. The active-site Proton acceptor is the His122. 4 residues coordinate Zn(2+): Cys130, Cys133, Cys152, and Cys155. NAD(+) contacts are provided by Thr193, Ser194, Asn216, and Ile234.

This sequence belongs to the sirtuin family. Class U subfamily. Zn(2+) serves as cofactor.

Its subcellular location is the cytoplasm. The enzyme catalyses N(6)-acetyl-L-lysyl-[protein] + NAD(+) + H2O = 2''-O-acetyl-ADP-D-ribose + nicotinamide + L-lysyl-[protein]. Functionally, NAD-dependent protein deacetylase which modulates the activities of several enzymes which are inactive in their acetylated form. This is NAD-dependent protein deacetylase from Clostridium tetani (strain Massachusetts / E88).